The following is a 101-amino-acid chain: NAD(P)H-quinone oxidoreductase subunit 4L, chloroplastic (101 aa).

Transmembrane regions (helical) follow at residues 2–22 (MLEYVLGLSAYLFSIGIYGLI), 32–52 (MCLELILNAVNLNFVTFSDFF), and 61–81 (ILSIFVISIAAAEAAIGPAIV).

This sequence belongs to the complex I subunit 4L family. NDH is composed of at least 16 different subunits, 5 of which are encoded in the nucleus.

The protein resides in the plastid. Its subcellular location is the chloroplast thylakoid membrane. It catalyses the reaction a plastoquinone + NADH + (n+1) H(+)(in) = a plastoquinol + NAD(+) + n H(+)(out). The catalysed reaction is a plastoquinone + NADPH + (n+1) H(+)(in) = a plastoquinol + NADP(+) + n H(+)(out). Its function is as follows. NDH shuttles electrons from NAD(P)H:plastoquinone, via FMN and iron-sulfur (Fe-S) centers, to quinones in the photosynthetic chain and possibly in a chloroplast respiratory chain. The immediate electron acceptor for the enzyme in this species is believed to be plastoquinone. Couples the redox reaction to proton translocation, and thus conserves the redox energy in a proton gradient. In Populus alba (White poplar), this protein is NAD(P)H-quinone oxidoreductase subunit 4L, chloroplastic.